A 155-amino-acid chain; its full sequence is Ribosomal RNA large subunit methyltransferase H (155 aa).

The S-adenosyl-L-methionine site is built by L72 and G104.

The protein belongs to the RNA methyltransferase RlmH family. As to quaternary structure, homodimer.

It localises to the cytoplasm. The enzyme catalyses pseudouridine(1915) in 23S rRNA + S-adenosyl-L-methionine = N(3)-methylpseudouridine(1915) in 23S rRNA + S-adenosyl-L-homocysteine + H(+). Functionally, specifically methylates the pseudouridine at position 1915 (m3Psi1915) in 23S rRNA. This Fusobacterium nucleatum subsp. nucleatum (strain ATCC 25586 / DSM 15643 / BCRC 10681 / CIP 101130 / JCM 8532 / KCTC 2640 / LMG 13131 / VPI 4355) protein is Ribosomal RNA large subunit methyltransferase H.